The primary structure comprises 160 residues: Cytochrome b6-f complex subunit 4 (160 aa).

Transmembrane regions (helical) follow at residues 36 to 56, 95 to 115, and 131 to 151; these read LLYI…GLAV, LLGV…PFLE, and TVFL…TLPI.

Belongs to the cytochrome b family. PetD subfamily. As to quaternary structure, the 4 large subunits of the cytochrome b6-f complex are cytochrome b6, subunit IV (17 kDa polypeptide, petD), cytochrome f and the Rieske protein, while the 4 small subunits are petG, petL, petM and petN. The complex functions as a dimer.

It localises to the plastid. The protein resides in the chloroplast thylakoid membrane. Functionally, component of the cytochrome b6-f complex, which mediates electron transfer between photosystem II (PSII) and photosystem I (PSI), cyclic electron flow around PSI, and state transitions. This Daucus carota (Wild carrot) protein is Cytochrome b6-f complex subunit 4.